We begin with the raw amino-acid sequence, 288 residues long: 4-diphosphocytidyl-2-C-methyl-D-erythritol kinase (288 aa).

The active site involves Lys8. 90-100 is an ATP binding site; that stretch reads PLEAGLAGGSA. Asp132 is an active-site residue.

Belongs to the GHMP kinase family. IspE subfamily.

It carries out the reaction 4-CDP-2-C-methyl-D-erythritol + ATP = 4-CDP-2-C-methyl-D-erythritol 2-phosphate + ADP + H(+). The protein operates within isoprenoid biosynthesis; isopentenyl diphosphate biosynthesis via DXP pathway; isopentenyl diphosphate from 1-deoxy-D-xylulose 5-phosphate: step 3/6. Its function is as follows. Catalyzes the phosphorylation of the position 2 hydroxy group of 4-diphosphocytidyl-2C-methyl-D-erythritol. In Carboxydothermus hydrogenoformans (strain ATCC BAA-161 / DSM 6008 / Z-2901), this protein is 4-diphosphocytidyl-2-C-methyl-D-erythritol kinase.